Reading from the N-terminus, the 233-residue chain is uncharacterized protein (233 aa).

The disordered stretch occupies residues Arg21 to Arg43.

This is an uncharacterized protein from Mycobacterium tuberculosis (strain CDC 1551 / Oshkosh).